The sequence spans 130 residues: Chorion class B protein PC10 (130 aa).

The left arm stretch occupies residues 1–22; it reads GAWNGRLGCGCGGIAPAAELAA. The central domain stretch occupies residues 23–93; sequence SYGGGLGVAS…GNGALGITAE (71 aa). The segment at 94–130 is right arm (Gly-rich tandem repeats); the sequence is RGYGAGIGYEGLGLGYGAGIGYKGYGLGGCGCGCGRL.

It belongs to the chorion protein family.

Functionally, this protein is one of many from the eggshell of the silk moth. The polypeptide is Chorion class B protein PC10 (Antheraea polyphemus (Polyphemus moth)).